A 108-amino-acid chain; its full sequence is UPF0060 membrane protein SAR2425 (108 aa).

4 consecutive transmembrane segments (helical) span residues 5–25, 31–51, 60–80, and 86–106; these read IFIFILAGLCEIGGGYLIWLW, SSLVGLIGGVILMLYGVIATF, VYAAYGGVFIIMSLIFAMVVD, and KYDVIGAIICIVGVLVMLLPS.

This sequence belongs to the UPF0060 family.

Its subcellular location is the cell membrane. The protein is UPF0060 membrane protein SAR2425 of Staphylococcus aureus (strain MRSA252).